Reading from the N-terminus, the 240-residue chain is RNA polymerase sigma factor SigI (240 aa).

The Polymerase core binding motif lies at 56 to 69; the sequence is DEYSIGLFAFNEAI. A DNA-binding region (H-T-H motif) is located at residues 194-213; sequence LKHIEPRVRVSRKTLERHRK.

Belongs to the sigma-70 factor family. SigI subfamily. As to quaternary structure, interacts with RsgI.

The protein resides in the cytoplasm. Its activity is regulated as follows. Negatively regulated by the anti-sigma-I factor RsgI. Its function is as follows. Sigma factors are initiation factors that promote the attachment of RNA polymerase to specific initiation sites and are then released. This sigma factor contributes to both stress response and virulence gene expression. In Bacillus anthracis, this protein is RNA polymerase sigma factor SigI.